The sequence spans 794 residues: DNA mismatch repair protein pms1 (794 aa).

2 disordered regions span residues 351–384 and 409–442; these read SQIP…SFSY and GASL…TASS. Residues 352–371 are compositionally biased toward polar residues; it reads QIPDSSGDSTDQELPQSIPA. Basic and acidic residues predominate over residues 419-429; sequence LPERLQKDSMR. A compositionally biased stretch (polar residues) spans 430–442; that stretch reads RSSPLNEKVTASS.

Belongs to the DNA mismatch repair MutL/HexB family.

Functionally, this protein is involved in the repair of mismatches in DNA. The polypeptide is DNA mismatch repair protein pms1 (pms1) (Schizosaccharomyces pombe (strain 972 / ATCC 24843) (Fission yeast)).